We begin with the raw amino-acid sequence, 158 residues long: NADH-quinone oxidoreductase subunit B (158 aa).

[4Fe-4S] cluster-binding residues include Cys-37, Cys-38, Cys-102, and Cys-132.

The protein belongs to the complex I 20 kDa subunit family. In terms of assembly, NDH-1 is composed of 14 different subunits. Subunits NuoB, C, D, E, F, and G constitute the peripheral sector of the complex. [4Fe-4S] cluster is required as a cofactor.

Its subcellular location is the cell inner membrane. The enzyme catalyses a quinone + NADH + 5 H(+)(in) = a quinol + NAD(+) + 4 H(+)(out). Its function is as follows. NDH-1 shuttles electrons from NADH, via FMN and iron-sulfur (Fe-S) centers, to quinones in the respiratory chain. Couples the redox reaction to proton translocation (for every two electrons transferred, four hydrogen ions are translocated across the cytoplasmic membrane), and thus conserves the redox energy in a proton gradient. This chain is NADH-quinone oxidoreductase subunit B, found in Dechloromonas aromatica (strain RCB).